Reading from the N-terminus, the 339-residue chain is Anthranilate phosphoribosyltransferase (339 aa).

5-phospho-alpha-D-ribose 1-diphosphate-binding positions include Gly79, 82–83 (GD), Ser87, 89–92 (NIST), 107–115 (KHGNRSISS), and Ser119. Gly79 is a binding site for anthranilate. Ser91 provides a ligand contact to Mg(2+). Asn110 serves as a coordination point for anthranilate. Arg165 is an anthranilate binding site. Mg(2+) is bound by residues Asp224 and Glu225.

Belongs to the anthranilate phosphoribosyltransferase family. Homodimer. Mg(2+) is required as a cofactor.

The enzyme catalyses N-(5-phospho-beta-D-ribosyl)anthranilate + diphosphate = 5-phospho-alpha-D-ribose 1-diphosphate + anthranilate. It participates in amino-acid biosynthesis; L-tryptophan biosynthesis; L-tryptophan from chorismate: step 2/5. In terms of biological role, catalyzes the transfer of the phosphoribosyl group of 5-phosphorylribose-1-pyrophosphate (PRPP) to anthranilate to yield N-(5'-phosphoribosyl)-anthranilate (PRA). The sequence is that of Anthranilate phosphoribosyltransferase from Listeria welshimeri serovar 6b (strain ATCC 35897 / DSM 20650 / CCUG 15529 / CIP 8149 / NCTC 11857 / SLCC 5334 / V8).